The chain runs to 360 residues: Endolytic peptidoglycan transglycosylase RlpA (360 aa).

The first 17 residues, 1–17 (MRKEWLWVGIASVLLSA), serve as a signal peptide directing secretion. C18 carries the N-palmitoyl cysteine lipid modification. C18 is lipidated: S-diacylglycerol cysteine. An SPOR domain is found at 283–359 (SAISGGYVVQ…AQQQSFIVAA (77 aa)).

The protein belongs to the RlpA family.

The protein localises to the cell membrane. Functionally, lytic transglycosylase with a strong preference for naked glycan strands that lack stem peptides. The sequence is that of Endolytic peptidoglycan transglycosylase RlpA from Yersinia pestis.